The chain runs to 446 residues: Alkylglycerol monooxygenase (446 aa).

2 helical membrane passes run 43 to 63 (ATVY…AWKG) and 110 to 130 (WDSP…YYWF). One can recognise a Fatty acid hydroxylase domain in the interval 118 to 248 (LTFLGVDFGY…LIIWDRMFGT (131 aa)). Positions 131–135 (HRMAH) match the Histidine box-1 motif. Positions 144–148 (HQTHH) match the Histidine box-2 motif. A helical transmembrane segment spans residues 167–187 (YFSWMFYWPMAFCIPPSVFAV). The short motif at 220–224 (HRVHH) is the Histidine box-3 element. Helical transmembrane passes span 339–359 (MMHF…KLIL), 362–382 (ATLL…GFIF), and 412–434 (VPYL…GLKA).

This sequence belongs to the sterol desaturase family. TMEM195 subfamily. Fe cation is required as a cofactor.

Its subcellular location is the endoplasmic reticulum membrane. It catalyses the reaction 1-O-(1,2-saturated-alkyl)-sn-glycerol + (6R)-L-erythro-5,6,7,8-tetrahydrobiopterin + O2 = a 1-(1-hydroxyalkyl)-sn-glycerol + (6R)-L-erythro-6,7-dihydrobiopterin + H2O. Its function is as follows. Glyceryl-ether monooxygenase that cleaves the O-alkyl bond of ether lipids. Ether lipids are essential components of brain membranes. This chain is Alkylglycerol monooxygenase (agmo), found in Xenopus tropicalis (Western clawed frog).